We begin with the raw amino-acid sequence, 283 residues long: Prepilin leader peptidase/N-methyltransferase (283 aa).

The next 7 helical transmembrane spans lie at 13–33 (VWLL…NVVI), 106–126 (WRYP…GLLW), 128–148 (PGLA…LAAI), 153–173 (QLLP…FNLA), 176–196 (FVPL…LWLI), 216–236 (LLAA…VLIA), and 259–279 (LAFG…NVLG).

Belongs to the peptidase A24 family.

It is found in the cell inner membrane. It carries out the reaction Typically cleaves a -Gly-|-Phe- bond to release an N-terminal, basic peptide of 5-8 residues from type IV prepilin, and then N-methylates the new N-terminal amino group, the methyl donor being S-adenosyl-L-methionine.. Its function is as follows. Plays a role in type II pseudopili formation by proteolytically removing the leader sequence from substrate proteins and subsequently monomethylating the alpha-amino group of the newly exposed N-terminal phenylalanine. Substrates include proteins required for biogenesis of the type II general secretory apparatus. This chain is Prepilin leader peptidase/N-methyltransferase (outO), found in Dickeya chrysanthemi (Pectobacterium chrysanthemi).